We begin with the raw amino-acid sequence, 320 residues long: 1,5-anhydro-D-fructose reductase (320 aa).

Residue Tyr40 is the Proton donor of the active site. His102 serves as a coordination point for substrate. Residues Gln194 and Ile265–Asn277 contribute to the NADP(+) site.

This sequence belongs to the aldo/keto reductase family. In terms of assembly, monomer.

It is found in the cytoplasm. The catalysed reaction is 1,5-anhydro-D-glucitol + NADP(+) = 1,5-anhydro-D-fructose + NADPH + H(+). Inhibited by p-chloromercuribenzoic acid and alkyliodines. In terms of biological role, catalyzes the NADPH-dependent reduction of 1,5-anhydro-D-fructose (AF) to 1,5-anhydro-D-glucitol. This Macaca fascicularis (Crab-eating macaque) protein is 1,5-anhydro-D-fructose reductase (AKR1E2).